The sequence spans 563 residues: Lipase 2 (563 aa).

The signal sequence occupies residues 1–19 (MVSKSLFLAAAVNLAGVLA). Position 20 is a pyrrolidone carboxylic acid (Gln20). Residues Cys80 and Cys124 are joined by a disulfide bond. Ser236 (acyl-ester intermediate) is an active-site residue. Cys295 and Cys307 are disulfide-bonded. A glycan (N-linked (GlcNAc...) asparagine) is linked at Asn302. The active-site Charge relay system is Glu373. A glycan (N-linked (GlcNAc...) asparagine) is linked at Asn383. The active-site Charge relay system is His482.

The protein belongs to the type-B carboxylesterase/lipase family. Monomer.

The protein localises to the secreted. The enzyme catalyses a triacylglycerol + H2O = a diacylglycerol + a fatty acid + H(+). Hydrolyzes all ester bonds in triglyceride and displays a high affinity for triolein. For unsaturated substrates having long fatty acyl chains (C18:2 cis-9, cis-12 and C18:3 cis-9, cis-12, cis-15) GCL I shows higher specific activity than GCL II, whereas GCL II shows higher specific activity against saturated substrates having short fatty acid chains (C8, C10, C12 and C14). This Geotrichum candidum (Oospora lactis) protein is Lipase 2 (LIP2).